Here is a 342-residue protein sequence, read N- to C-terminus: Uroporphyrinogen decarboxylase (342 aa).

Substrate is bound by residues 24-28, Asp74, Tyr151, Ser206, and His322; that span reads RQAGR.

It belongs to the uroporphyrinogen decarboxylase family. In terms of assembly, homodimer.

It is found in the cytoplasm. It carries out the reaction uroporphyrinogen III + 4 H(+) = coproporphyrinogen III + 4 CO2. It functions in the pathway porphyrin-containing compound metabolism; protoporphyrin-IX biosynthesis; coproporphyrinogen-III from 5-aminolevulinate: step 4/4. Its function is as follows. Catalyzes the decarboxylation of four acetate groups of uroporphyrinogen-III to yield coproporphyrinogen-III. This Paracoccus denitrificans (strain Pd 1222) protein is Uroporphyrinogen decarboxylase.